Reading from the N-terminus, the 338-residue chain is Envelope glycoprotein K (338 aa).

The first 30 residues, 1–30 (MLAVRSLQHLSTVVLITAYGLVLVWYTVFG), serve as a signal peptide directing secretion. Topologically, residues 31–121 (ASPLHRCIYA…VNCLETLWYT (91 aa)) are extracellular. Positions 31–121 (ASPLHRCIYA…VNCLETLWYT (91 aa)) are involved in fusion. N-linked (GlcNAc...) asparagine; by host glycans are attached at residues Asn48 and Asn58. A helical transmembrane segment spans residues 122–140 (RVRLVVVGWFLYLAFVALH). The Cytoplasmic portion of the chain corresponds to 141–212 (QRRCMFGVVS…DPVTFLYHRP (72 aa)). Residues 213 to 233 (AIGVIVGCELIVRFVAVGLIV) traverse the membrane as a helical segment. The Extracellular portion of the chain corresponds to 234-243 (GTAFISRGAC). A helical transmembrane segment spans residues 244–264 (AITYPLFLTITTWCFVSTIGL). The Cytoplasmic portion of the chain corresponds to 265-301 (TELYCILRRGPAPKNADKAAAPGRSKGLSGVCGRCCS). The segment at 265–301 (TELYCILRRGPAPKNADKAAAPGRSKGLSGVCGRCCS) is interaction with UL20. The chain crosses the membrane as a helical span at residues 302 to 322 (IILSGIAMRLCYIAVVAGVVL). Residues 323 to 338 (VALHYEQEIQRRLFDV) are Extracellular-facing.

It belongs to the alphaherpesvirinae glycoprotein K family. Interacts (via UL20 interaction region) with protein UL20 (via N-terminus); this interaction probably plays a role in the coordinate transport of protein UL20 and gK to the trans-Golgi network (TGN), and is required for the cell surface expression of gK. In terms of processing, N-glycosylated.

It is found in the host cell membrane. Its subcellular location is the host endosome membrane. The protein localises to the host Golgi apparatus membrane. Its function is as follows. Glycoprotein that probably modulates membrane fusion events during secondary envelopment of cytoplasmic capsids that bud into specific trans-Golgi network (TGN)-derived membranes. Also plays a role, together with gB, in virus-induced cell-to-cell fusion (syncytia formation). Seems to block fusion of virions with infected-cell membranes. In Homo sapiens (Human), this protein is Envelope glycoprotein K (gK).